A 146-amino-acid chain; its full sequence is Hemoglobin subunit beta (146 aa).

The 145-residue stretch at 2-146 (HWSAEEKQLI…VAHALARKYH (145 aa)) folds into the Globin domain. Positions 63 and 92 each coordinate heme b.

It belongs to the globin family. Heterotetramer of two alpha chains and two beta chains. As to expression, red blood cells.

Functionally, involved in oxygen transport from the lung to the various peripheral tissues. The chain is Hemoglobin subunit beta (HBB) from Aptenodytes forsteri (Emperor penguin).